Consider the following 382-residue polypeptide: Norsolorinic acid reductase B (382 aa).

Asp64 contacts NADP(+). The Proton donor role is filled by Tyr69. Position 143 (His143) interacts with substrate. NADP(+)-binding positions include 173–174, Gln199, 228–238, and 302–310; these read SD, GVLNQGRFRTE, and RKVDHLTGV.

Belongs to the aldo/keto reductase family. Aldo/keto reductase 2 subfamily.

It functions in the pathway mycotoxin biosynthesis; aflatoxin biosynthesis. Functionally, norsolorinic acid reductase; part of the gene cluster that mediates the biosynthesis of aflatoxins, a group of polyketide-derived furanocoumarins, and part of the most toxic and carcinogenic compounds among the known mycotoxins. The four major aflatoxins produced by A.parasiticus are aflatoxin B1 (AFB1), aflatoxin B2 (AFB2), aflatoxin G1 (AFG1) and aflatoxin G2 (AFG2). Within the aflatoxin pathway, the norsolorinic acid reductase aflE may play a role in the conversion of norsolorinic acid (NOR) to averantin (AVN). The biosynthesis of aflatoxins begins with the norsolorinic acid synthase aflC that combines a hexanoyl starter unit produced by the fatty acid synthase aflA/aflB and 7 malonyl-CoA extender units to synthesize the precursor NOR. The second step is the conversion of NOR to averantin and requires the norsolorinic acid ketoreductase aflD, which catalyzes the dehydration of norsolorinic acid to form (1'S)-averantin. The norsolorinic acid reductases aflE and aflF may also play a role in the conversion of NOR to AVN. The cytochrome P450 monooxygenase aflG then catalyzes the hydroxylation of AVN to 5'hydroxyaverantin (HAVN). The next step is performed by the 5'-hydroxyaverantin dehydrogenase aflH that transforms HAVN to 5'-oxoaverantin (OAVN) which is further converted to averufin (AVF) by aflK that plays a dual role in the pathway, as a 5'-oxoaverantin cyclase that mediates conversion of 5'-oxoaverantin, as well as a versicolorin B synthase in a later step in the pathway. The averufin oxidase aflI catalyzes the conversion of AVF to versiconal hemiacetal acetate (VHA). VHA is then the substrate for the versiconal hemiacetal acetate esterase aflJ to yield versiconal (VAL). Versicolorin B synthase aflK then converts VAL to versicolorin B (VERB) by closing the bisfuran ring of aflatoxin which is required for DNA-binding, thus giving to aflatoxin its activity as a mutagen. Then, the activity of the versicolorin B desaturase aflL leads to versicolorin A (VERA). A branch point starts from VERB since it can also be converted to dihydrodemethylsterigmatocystin (DMDHST), probably also by aflL, VERA being a precursor for aflatoxins B1 and G1, and DMDHST for aflatoxins B2 and G2. Next, the versicolorin reductase aflM and the cytochrome P450 monooxygenase aflN are involved in conversion of VERA to demethylsterigmatocystin (DMST). AflX and aflY seem also involved in this step, through probable aflX-mediated epoxide ring-opening step following versicolorin A oxidation and aflY-mediated Baeyer-Villiger oxidation required for the formation of the xanthone ring. The methyltransferase aflO then leads to the modification of DMST to sterigmatocystin (ST), and of DMDHST to dihydrosterigmatocystin (DHST). Both ST and DHST are then substrates of the O-methyltransferase aflP to yield O-methylsterigmatocystin (OMST) and dihydro-O-methylsterigmatocystin (DHOMST), respectively. Finally OMST is converted to aflatoxins B1 and G1, and DHOMST to aflatoxins B2 and G2, via the action of several enzymes including O-methylsterigmatocystin oxidoreductase aflQ, the cytochrome P450 monooxygenase aflU, but also the NADH-dependent flavin oxidoreductase nadA which is specifically required for the synthesis of AFG1. This Aspergillus parasiticus (strain ATCC 56775 / NRRL 5862 / SRRC 143 / SU-1) protein is Norsolorinic acid reductase B.